The following is a 688-amino-acid chain: Eukaryotic translation initiation factor 3 subunit B (688 aa).

The disordered stretch occupies residues 1–32 (MAKKKGENYDSDGGDDQDYDEEPNFDDPEGFV). Residues 9–32 (YDSDGGDDQDYDEEPNFDDPEGFV) show a composition bias toward acidic residues. The RRM domain occupies 57 to 141 (NVIVVDNIPV…HTLLVNLFSD (85 aa)). WD repeat units follow at residues 208 to 246 (RDRF…KINK), 247 to 287 (FPHS…EKRS), 291 to 329 (DGTS…LLDK), 332 to 367 (IKVQ…TLLE), 440 to 482 (EVKE…EPTM), and 527 to 572 (GDHF…KRVN). Positions 613-642 (RIRMTRASKELLEKRAKLREQFVEYRTKRV) form a coiled coil.

This sequence belongs to the eIF-3 subunit B family. In terms of assembly, component of the eukaryotic translation initiation factor 3 (eIF-3) complex.

It is found in the cytoplasm. Its function is as follows. RNA-binding component of the eukaryotic translation initiation factor 3 (eIF-3) complex, which is involved in protein synthesis of a specialized repertoire of mRNAs and, together with other initiation factors, stimulates binding of mRNA and methionyl-tRNAi to the 40S ribosome. The eIF-3 complex specifically targets and initiates translation of a subset of mRNAs involved in cell proliferation. The chain is Eukaryotic translation initiation factor 3 subunit B from Aedes aegypti (Yellowfever mosquito).